A 361-amino-acid polypeptide reads, in one-letter code: Protein phosphatase 1 regulatory subunit 7 (361 aa).

Residues Met1–His64 form a disordered region. N-acetylalanine is present on Ala2. Phosphoserine occurs at positions 12, 24, 27, 45, and 48. Residues Glu17 to Lys34 are compositionally biased toward basic and acidic residues. Basic and acidic residues predominate over residues Ser48 to Glu58. LRR repeat units lie at residues Asp78 to Lys99, Lys100 to Gln121, Ser122 to Thr143, Glu144 to Thr165, Gln166 to His187, Gln188 to Thr209, Asn210 to Thr231, Asn232 to Val253, Asn254 to Asn275, Lys276 to Thr297, and Glu298 to Lys319. Ser323 carries the phosphoserine modification. The LRRCT domain occupies Asn332 to Phe361.

This sequence belongs to the SDS22 family. As to quaternary structure, interacts with PPP1CA, PPP1CB and PPP1CC/PPP1G. Widely expressed with high level in testis. Expression increases during puberty. Expressed in spermatids and probably also in spermatozoa.

The protein resides in the nucleus. Regulatory subunit of protein phosphatase 1. The chain is Protein phosphatase 1 regulatory subunit 7 (Ppp1r7) from Mus musculus (Mouse).